Consider the following 302-residue polypeptide: Oxygen-dependent coproporphyrinogen-III oxidase (302 aa).

A substrate-binding site is contributed by serine 94. Positions 98 and 108 each coordinate a divalent metal cation. Catalysis depends on histidine 108, which acts as the Proton donor. 110-112 (NVR) is a binding site for substrate. 2 residues coordinate a divalent metal cation: histidine 147 and histidine 177. The interval 242–277 (YVEFNLVFDRGTLFGLQSGGRAESILMSMPPVANWR) is important for dimerization. 260–262 (GGR) is a binding site for substrate.

The protein belongs to the aerobic coproporphyrinogen-III oxidase family. In terms of assembly, homodimer. The cofactor is a divalent metal cation.

The protein resides in the cytoplasm. It carries out the reaction coproporphyrinogen III + O2 + 2 H(+) = protoporphyrinogen IX + 2 CO2 + 2 H2O. It functions in the pathway porphyrin-containing compound metabolism; protoporphyrin-IX biosynthesis; protoporphyrinogen-IX from coproporphyrinogen-III (O2 route): step 1/1. Involved in the heme biosynthesis. Catalyzes the aerobic oxidative decarboxylation of propionate groups of rings A and B of coproporphyrinogen-III to yield the vinyl groups in protoporphyrinogen-IX. In Ralstonia pickettii (strain 12J), this protein is Oxygen-dependent coproporphyrinogen-III oxidase.